The chain runs to 92 residues: Small ribosomal subunit protein uS19c (92 aa).

It belongs to the universal ribosomal protein uS19 family.

It localises to the plastid. The protein localises to the chloroplast. In terms of biological role, protein S19 forms a complex with S13 that binds strongly to the 16S ribosomal RNA. This chain is Small ribosomal subunit protein uS19c, found in Chaetosphaeridium globosum (Charophycean green alga).